A 95-amino-acid chain; its full sequence is Small ribosomal subunit protein bS16 (95 aa).

The protein belongs to the bacterial ribosomal protein bS16 family.

The polypeptide is Small ribosomal subunit protein bS16 (Thermosipho melanesiensis (strain DSM 12029 / CIP 104789 / BI429)).